A 164-amino-acid chain; its full sequence is Protein-export protein SecB (164 aa).

The protein belongs to the SecB family. In terms of assembly, homotetramer, a dimer of dimers. One homotetramer interacts with 1 SecA dimer.

It is found in the cytoplasm. Its function is as follows. One of the proteins required for the normal export of preproteins out of the cell cytoplasm. It is a molecular chaperone that binds to a subset of precursor proteins, maintaining them in a translocation-competent state. It also specifically binds to its receptor SecA. In Zymomonas mobilis subsp. mobilis (strain ATCC 31821 / ZM4 / CP4), this protein is Protein-export protein SecB.